A 427-amino-acid polypeptide reads, in one-letter code: Light-independent protochlorophyllide reductase subunit N (427 aa).

[4Fe-4S] cluster-binding residues include C28, C53, and C114.

This sequence belongs to the BchN/ChlN family. As to quaternary structure, protochlorophyllide reductase is composed of three subunits; BchL, BchN and BchB. Forms a heterotetramer of two BchB and two BchN subunits. The cofactor is [4Fe-4S] cluster.

The catalysed reaction is chlorophyllide a + oxidized 2[4Fe-4S]-[ferredoxin] + 2 ADP + 2 phosphate = protochlorophyllide a + reduced 2[4Fe-4S]-[ferredoxin] + 2 ATP + 2 H2O. The protein operates within porphyrin-containing compound metabolism; bacteriochlorophyll biosynthesis (light-independent). Functionally, component of the dark-operative protochlorophyllide reductase (DPOR) that uses Mg-ATP and reduced ferredoxin to reduce ring D of protochlorophyllide (Pchlide) to form chlorophyllide a (Chlide). This reaction is light-independent. The NB-protein (BchN-BchB) is the catalytic component of the complex. The chain is Light-independent protochlorophyllide reductase subunit N from Dinoroseobacter shibae (strain DSM 16493 / NCIMB 14021 / DFL 12).